The sequence spans 344 residues: N-acetyl-gamma-glutamyl-phosphate reductase (344 aa).

Residue C148 is part of the active site.

Belongs to the NAGSA dehydrogenase family. Type 1 subfamily.

Its subcellular location is the cytoplasm. The enzyme catalyses N-acetyl-L-glutamate 5-semialdehyde + phosphate + NADP(+) = N-acetyl-L-glutamyl 5-phosphate + NADPH + H(+). It functions in the pathway amino-acid biosynthesis; L-arginine biosynthesis; N(2)-acetyl-L-ornithine from L-glutamate: step 3/4. Catalyzes the NADPH-dependent reduction of N-acetyl-5-glutamyl phosphate to yield N-acetyl-L-glutamate 5-semialdehyde. The chain is N-acetyl-gamma-glutamyl-phosphate reductase from Geobacillus thermodenitrificans (strain NG80-2).